The primary structure comprises 266 residues: Dihydropteroate synthase (266 aa).

The 249-residue stretch at 12 to 260 (AAIMGILNVT…DVKANQDIVA (249 aa)) folds into the Pterin-binding domain. Asparagine 19 lines the Mg(2+) pocket. Residues threonine 59, aspartate 93, asparagine 112, aspartate 176, lysine 212, and 248–250 (RVH) each bind (7,8-dihydropterin-6-yl)methyl diphosphate.

This sequence belongs to the DHPS family. Homodimer or homotrimer. Mg(2+) is required as a cofactor.

It carries out the reaction (7,8-dihydropterin-6-yl)methyl diphosphate + 4-aminobenzoate = 7,8-dihydropteroate + diphosphate. Its pathway is cofactor biosynthesis; tetrahydrofolate biosynthesis; 7,8-dihydrofolate from 2-amino-4-hydroxy-6-hydroxymethyl-7,8-dihydropteridine diphosphate and 4-aminobenzoate: step 1/2. Its function is as follows. Catalyzes the condensation of para-aminobenzoate (pABA) with 6-hydroxymethyl-7,8-dihydropterin diphosphate (DHPt-PP) to form 7,8-dihydropteroate (H2Pte), the immediate precursor of folate derivatives. The polypeptide is Dihydropteroate synthase (folP) (Streptococcus pyogenes serotype M18 (strain MGAS8232)).